A 548-amino-acid polypeptide reads, in one-letter code: Nonribosomal peptide synthetase 8 (548 aa).

Residues M1–P77 form the Carrier domain. S35 carries the post-translational modification O-(pantetheine 4'-phosphoryl)serine. The tract at residues M122–A537 is condensation.

Belongs to the NRP synthetase family.

The protein operates within mycotoxin biosynthesis. Functionally, nonribosomal peptide synthetase; part of the gene cluster that mediates the biosynthesis of fumonisins B1 (FB1), B2 (FB2), B3 (FB3), and B4 (FB4), which are carcinogenic mycotoxins. Within the pathway FUM14 catalyzes esterification of CoA-activated tricarballylic acid to the C-14 and C-15 hydroxyls of the fumonisin backbone. The biosynthesis starts with the FUM1-catalyzed carbon chain assembly from one molecule of acetyl-CoA, eight molecules of malonyl-CoA, and two molecules of methionine (in S-adenosyl form). The C18 polyketide chain is released from the enzyme by a nucleophilic attack of a carbanion, which is derived from R-carbon of alanine by decarboxylation, on the carbonyl carbon of polyketide acyl chain. This step is catalyzed by the pyridoxal 5'-phosphate-dependent aminoacyl transferase FUM8. The resultant 3-keto intermediate is then stereospecifically reduced to a 3-hydroxyl product by reductase FUM13. Subsequent oxidations at C-10 by the cytochrome P450 monooxygenase FUM2, C-14 and C-15 by FUM6, FUM12 or FUM15, tricarballylic esterification of the hydroxyl groups on C-14 and C-15 by acyltransferase FUM14, and C-5 hydroxylation by 2-keto-glutarate-dependent dioxygenase FUM3 furnish the biosynthesis of fumonisins. The tricarballylic moieties are most likely derived from the citric acid cycle, and their addition to the carbon backbone may involve FUM7, FUM10, FUM11 and FUM14. The chain is Nonribosomal peptide synthetase 8 from Gibberella moniliformis (strain M3125 / FGSC 7600) (Maize ear and stalk rot fungus).